The chain runs to 118 residues: Eukaryotic translation initiation factor 4E-binding protein 1 (118 aa).

At Ser-2 the chain carries N-acetylserine. The segment at Val-27–Gly-48 is disordered. A compositionally biased stretch (polar residues) spans Tyr-34 to Gly-48. Thr-37 carries the phosphothreonine; by MTOR modification. Thr-41 is subject to Phosphothreonine. A Phosphoserine modification is found at Ser-44. Thr-46 is modified (phosphothreonine; by MTOR). Thr-50 bears the Phosphothreonine mark. Tyr-54 is subject to Phosphotyrosine. The YXXXXLphi motif motif lies at Tyr-54–Met-60. Residue Lys-57 forms a Glycyl lysine isopeptide (Lys-Gly) (interchain with G-Cter in ubiquitin) linkage. The segment at Asn-64–Ile-118 is disordered. Residue Ser-65 is modified to Phosphoserine; by DYRK2, MAPK1, MAPK3 and MTOR. Thr-70 bears the Phosphothreonine; by MTOR mark. The residue at position 77 (Thr-77) is a Phosphothreonine. 2 positions are modified to phosphoserine: Ser-83 and Ser-100. Phosphoserine; by DYRK2 is present on Ser-101. Residue Ser-112 is modified to Phosphoserine. A TOS motif motif is present at residues Phe-114–Ile-118.

The protein belongs to the eIF4E-binding protein family. Hypophosphorylated EIF4EBP1 competes with EIF4G1/EIF4G3 to interact with EIF4E; insulin stimulated MAP-kinase (MAPK1 and MAPK3) or mTORC1 phosphorylation of EIF4EBP1 causes dissociation of the complex allowing EIF4G1/EIF4G3 to bind and consequent initiation of translation. Interacts (via TOS motif) with RPTOR; promoting phosphorylation by mTORC1. Phosphorylated on serine and threonine residues in response to insulin, EGF and PDGF. Phosphorylation at Thr-37, Thr-46, Ser-65 and Thr-70, corresponding to the hyperphosphorylated form, is regulated by mTORC1 and abolishes binding to EIF4E. Post-translationally, ubiquitinated: when eIF4E levels are low, hypophosphorylated form is ubiquitinated by the BCR(KLHL25) complex, leading to its degradation and serving as a homeostatic mechanism to maintain translation and prevent eIF4E inhibition when eIF4E levels are low. Not ubiquitinated when hyperphosphorylated (at Thr-37, Thr-46, Ser-65 and Thr-70) or associated with eIF4E.

Its subcellular location is the cytoplasm. The protein resides in the nucleus. Repressor of translation initiation that regulates EIF4E activity by preventing its assembly into the eIF4F complex: hypophosphorylated form competes with EIF4G1/EIF4G3 and strongly binds to EIF4E, leading to repress translation. In contrast, hyperphosphorylated form dissociates from EIF4E, allowing interaction between EIF4G1/EIF4G3 and EIF4E, leading to initiation of translation. Mediates the regulation of protein translation by hormones, growth factors and other stimuli that signal through the MAP kinase and mTORC1 pathways. This is Eukaryotic translation initiation factor 4E-binding protein 1 (EIF4EBP1) from Bos taurus (Bovine).